We begin with the raw amino-acid sequence, 466 residues long: Muscarinic acetylcholine receptor M2 (466 aa).

The Extracellular portion of the chain corresponds to 1–22 (MNNSTNSSNSGLALTSPYKTFE). Residues Asn-2, Asn-3, and Asn-6 are each glycosylated (N-linked (GlcNAc...) asparagine). The chain crosses the membrane as a helical span at residues 23 to 45 (VVFIVLVAGSLSLVTIIGNILVM). At 46–59 (VSIKVNRHLQTVNN) the chain is on the cytoplasmic side. A helical membrane pass occupies residues 60–80 (YFLFSLACADLIIGVFSMNLY). At 81 to 97 (TLYTVIGYWPLGPVVCD) the chain is on the extracellular side. Cys-96 and Cys-176 are oxidised to a cystine. The chain crosses the membrane as a helical span at residues 98 to 119 (LWLALDYVVSNASVMNLLIISF). Residues 120-122 (DRY) carry the Important for signaling motif. Residues 120–139 (DRYFCVTKPLTYPVKRTTKM) lie on the Cytoplasmic side of the membrane. The helical transmembrane segment at 140 to 162 (AGMMIAAAWVLSFILWAPAILFW) threads the bilayer. Over 163 to 184 (QFIVGVRTVEDGECYIQFFSNA) the chain is Extracellular. The helical transmembrane segment at 185-209 (AVTFGTAIAAFYLPVIIMTVLYWHI) threads the bilayer. At 210-387 (SRASKSRIKK…PPSREKKVTR (178 aa)) the chain is on the cytoplasmic side. The segment at 218–320 (KKDKKEPVAN…SLGHSKDENS (103 aa)) is disordered. Ser-232 is modified (phosphoserine). Basic and acidic residues predominate over residues 254–270 (ALEHNKIQNGKAPRDAV). Polar residues-rich tracts occupy residues 284 to 293 (NDSTSVSAVA) and 304 to 313 (DENTVSTSLG). A helical transmembrane segment spans residues 388 to 410 (TILAILLAFIITWAPYNVMVLIN). The Extracellular segment spans residues 411-418 (TFCAPCIP). Cys-413 and Cys-416 are joined by a disulfide. The chain crosses the membrane as a helical span at residues 419–442 (NTVWTIGYWLCYINSTINPACYAL). The short motif at 436–440 (NPACY) is the Important for signaling element. At 443 to 466 (CNATFKKTFKHLLMCHYKNIGATR) the chain is on the cytoplasmic side. Thr-446, Thr-450, and Thr-465 each carry phosphothreonine.

This sequence belongs to the G-protein coupled receptor 1 family. Muscarinic acetylcholine receptor subfamily. CHRM2 sub-subfamily. Interacts with ARRB1 and ARRB2. Interacts with RACK1; the interaction regulates CHRM2 internalization. In terms of processing, phosphorylated in response to agonist treatment.

It is found in the cell membrane. It localises to the postsynaptic cell membrane. Its function is as follows. The muscarinic acetylcholine receptor mediates various cellular responses, including inhibition of adenylate cyclase, breakdown of phosphoinositides and modulation of potassium channels through the action of G proteins. Primary transducing effect is adenylate cyclase inhibition. The chain is Muscarinic acetylcholine receptor M2 (CHRM2) from Sus scrofa (Pig).